The primary structure comprises 367 residues: Germination protease (367 aa).

A propeptide spanning residues 1–15 (MKEPLDLSKYSIRTD) is cleaved from the precursor.

It belongs to the peptidase A25 family. Homotetramer. Post-translationally, autoproteolytically processed. The inactive tetrameric zymogen termed p46 autoprocesses to a smaller form termed p41, which is active only during spore germination.

It carries out the reaction Endopeptidase action with P4 Glu or Asp, P1 preferably Glu &gt; Asp, P1' hydrophobic and P2' Ala.. Initiates the rapid degradation of small, acid-soluble proteins during spore germination. The sequence is that of Germination protease from Bacillus cereus (strain B4264).